The sequence spans 64 residues: MPKMKTDRGVAKRFKKTANGFKRKQAHLRHILTKKSTKRKRHLRNKCLVAKVDVPAIARQLPYA.

The protein belongs to the bacterial ribosomal protein bL35 family.

The protein is Large ribosomal subunit protein bL35 of Shewanella oneidensis (strain ATCC 700550 / JCM 31522 / CIP 106686 / LMG 19005 / NCIMB 14063 / MR-1).